A 497-amino-acid polypeptide reads, in one-letter code: Vacuolar-processing enzyme beta-isozyme 1 (497 aa).

The first 23 residues, 1–23, serve as a signal peptide directing secretion; that stretch reads MAARCWVWGFVVALLAVAAAADG. N-linked (GlcNAc...) asparagine glycosylation is present at asparagine 153. Histidine 180 is a catalytic residue. Cysteine 222 functions as the Nucleophile in the catalytic mechanism. Cysteine 255 and cysteine 269 form a disulfide bridge. Asparagine 340 carries N-linked (GlcNAc...) asparagine glycosylation. 2 disulfides stabilise this stretch: cysteine 432-cysteine 462 and cysteine 444-cysteine 479.

The protein belongs to the peptidase C13 family. In terms of processing, auto-catalytic activation. As to expression, expressed in developing seeds.

Its subcellular location is the protein storage vacuole. The enzyme catalyses Hydrolysis of proteins and small molecule substrates at -Asn-|-Xaa- bonds.. In terms of biological role, asparagine-specific endopeptidase that may be involved in processing of proteins targeted to vacuoles. Cysteine protease required for post-translational proteolysis of seed storage proteins in the protein storage vacuole (PSV) of developing seeds, by processing of proglutelin precursor to mature glutelin subunits, thus contributing to the formation of protein crystalline structures in PSV. This chain is Vacuolar-processing enzyme beta-isozyme 1, found in Oryza sativa subsp. japonica (Rice).